A 111-amino-acid polypeptide reads, in one-letter code: Colipase (111 aa).

An N-terminal signal peptide occupies residues 1–16 (MKVLVLLLVTLAVVYA). Residues 17–21 (APDPR) constitute a propeptide, enterostatin, activation peptide. Intrachain disulfides connect Cys33–Cys44, Cys39–Cys55, Cys43–Cys77, Cys65–Cys85, and Cys79–Cys103.

This sequence belongs to the colipase family. As to quaternary structure, forms a 1:1 stoichiometric complex with pancreatic lipase. As to expression, expressed by the pancreas.

The protein localises to the secreted. Colipase is a cofactor of pancreatic lipase. It allows the lipase to anchor itself to the lipid-water interface. Without colipase the enzyme is washed off by bile salts, which have an inhibitory effect on the lipase. Functionally, enterostatin has a biological activity as a satiety signal. This chain is Colipase (CLPS), found in Ictidomys tridecemlineatus (Thirteen-lined ground squirrel).